Consider the following 125-residue polypeptide: Profilin-P (125 aa).

Ser-2 carries the post-translational modification N-acetylserine.

The protein belongs to the profilin family. Occurs in many kinds of cells as a complex with monomeric actin in a 1:1 ratio.

It localises to the cytoplasm. It is found in the cytoskeleton. Functionally, binds to actin and affects the structure of the cytoskeleton. At high concentrations, profilin prevents the polymerization of actin, whereas it enhances it at low concentrations. By binding to PIP2, it inhibits the formation of IP3 and DG. The protein is Profilin-P (PROP) of Physarum polycephalum (Slime mold).